A 643-amino-acid chain; its full sequence is UPF0313 protein CLD_0573 (643 aa).

Positions 295-566 (AIKEVKFSIT…RMQRALLQFS (272 aa)) constitute a Radical SAM core domain. Residues C309, C313, and C316 each coordinate [4Fe-4S] cluster. The interval 598 to 643 (NKPYKKSHKKNNAKNNNNHYNKNNNKNKDISKKNKKNSLSKHKKRK) is disordered. Residues 600 to 609 (PYKKSHKKNN) are compositionally biased toward basic residues. Residues 610–621 (AKNNNNHYNKNN) show a composition bias toward low complexity. The segment covering 630-643 (KNKKNSLSKHKKRK) has biased composition (basic residues).

This sequence belongs to the UPF0313 family. [4Fe-4S] cluster serves as cofactor.

This Clostridium botulinum (strain Okra / Type B1) protein is UPF0313 protein CLD_0573.